The following is a 173-amino-acid chain: Adenine phosphoribosyltransferase (173 aa).

This sequence belongs to the purine/pyrimidine phosphoribosyltransferase family. Homodimer.

It localises to the cytoplasm. It catalyses the reaction AMP + diphosphate = 5-phospho-alpha-D-ribose 1-diphosphate + adenine. The protein operates within purine metabolism; AMP biosynthesis via salvage pathway; AMP from adenine: step 1/1. Catalyzes a salvage reaction resulting in the formation of AMP, that is energically less costly than de novo synthesis. This is Adenine phosphoribosyltransferase from Petrotoga mobilis (strain DSM 10674 / SJ95).